A 386-amino-acid chain; its full sequence is 8-amino-7-oxononanoate synthase (386 aa).

Arginine 19 is a binding site for substrate. 106–107 (GY) contributes to the pyridoxal 5'-phosphate binding site. Residue histidine 131 coordinates substrate. 3 residues coordinate pyridoxal 5'-phosphate: serine 177, histidine 205, and threonine 233. N6-(pyridoxal phosphate)lysine is present on lysine 236. A substrate-binding site is contributed by threonine 350.

The protein belongs to the class-II pyridoxal-phosphate-dependent aminotransferase family. BioF subfamily. Homodimer. It depends on pyridoxal 5'-phosphate as a cofactor.

The catalysed reaction is 6-carboxyhexanoyl-[ACP] + L-alanine + H(+) = (8S)-8-amino-7-oxononanoate + holo-[ACP] + CO2. It participates in cofactor biosynthesis; biotin biosynthesis. Its function is as follows. Catalyzes the decarboxylative condensation of pimeloyl-[acyl-carrier protein] and L-alanine to produce 8-amino-7-oxononanoate (AON), [acyl-carrier protein], and carbon dioxide. The chain is 8-amino-7-oxononanoate synthase from Alcanivorax borkumensis (strain ATCC 700651 / DSM 11573 / NCIMB 13689 / SK2).